Here is a 144-residue protein sequence, read N- to C-terminus: Ribosomally synthesized cyclic peptide phomopsin precursor phomA' (144 aa).

A signal peptide spans 1 to 18; sequence MRFTPAIVIAAFCSLAVA. 9 consecutive propeptides follow at residues 19-35, 42-50, 57-65, 72-79, 86-94, 101-108, 115-123, 130-137, and Lys144; these read APAA…AVED, KKRGEAVED, and KRGEAVED.

PhomA' is processed by several endopeptidases including kexin proteases as well as the cluster-specific S41 family peptidase phomP1' and the peptidase phomG' to produce 5 identical copies of the hexapeptide Tyr-Val-Ile-Pro-Ile-Asp and 3 identical copies of Tyr-Val-Ile-Pro-Phe-Asp, that are further modified into phomapsins A and P, respectively. The timing and order of proteolysis of the phomA' precursor and PTMs are still unknown. Two tyrosinase-like enzyme phomQ1' and PhomQ2, catalyze the chlorination and hydroxylation of Tyr, respectively. PhomYb', is proposed to be involved in the construction of the macrocyclic structure. The other four ustYa family proteins may be involved in PTMs that generate the unique structure of phomopsin A. PhomYa' is required for the hydroxylation of C-beta of Tyr. PhomYc', PhomYd', and PhomYe' are responsible for the biosynthesis of 2,3-dehydroisoleucine (dIle), 2,3-dehydroaspartic acid (dAsp), and 3,4-dehydroproline (dPro), respectively. While dIle formation by phomYc is indispensable for the installation of dAsp by phomYd, the order of the other PTMs have not been elucidated yet. Most of the biosynthetic enzymes likely have broad substrate specificity, and thus, there might be a metabolic grid from a precursor to phomopsin A. The enzyme(s) responsible for the biosynthesis of 3,4-dehydrovaline (dVal) have also not been identified yet. Finally, PhomM' acts as an S-adenosylmethionine-dependent alpha-N-methyltransferase that catalyzes two successive N-methylation reactions, converting N-desmethyl-phomopsin A to phomopsin A and phomopsin A further to an N,N-dimethylated congener called phomopsin E.

Its pathway is mycotoxin biosynthesis. Functionally, ribosomally synthesized cyclic peptide phomopsin precursor; part of the gene cluster that mediates the biosynthesis of the phomopsins, a group of hexapeptide mycotoxins which infects lupins and causes lupinosis disease in livestock. The phomA' translated product contains a 5-fold repeated peptide embedding the hexapeptide Tyr-Val-Ile-Pro-Ile-Asp and a 3-fold repeated peptide embedding the hexapeptide Tyr-Val-Ile-Pro-Phe-Asp, that is converted into phomapsin A and phomapsin P, respectively. After being excised from the precursor peptide by kexin proteases, the core peptides are cyclized and modified post-translationally by enzymes encoded within the corresponding gene cluster. This is Ribosomally synthesized cyclic peptide phomopsin precursor phomA' from Diaporthe leptostromiformis (Lupinosis disease fungus).